We begin with the raw amino-acid sequence, 912 residues long: Protein transport protein SEC24-2 (912 aa).

A compositionally biased stretch (basic residues) spans Met-1 to Val-11. 2 disordered regions span residues Met-1–Ser-83 and Pro-102–Pro-129. Polar residues-rich tracts occupy residues Ser-33–Ala-45, Gly-53–Ala-74, and Tyr-106–Pro-129. Zn(2+)-binding residues include Cys-226, Cys-229, Cys-248, and Cys-251. A zinc finger-like region spans residues Cys-226–Cys-251.

It belongs to the SEC23/SEC24 family. SEC24 subfamily. As to quaternary structure, the COPII coat is composed of at least 5 proteins: the SEC23/24 complex, the SEC13/31 complex, and the protein SAR1. Golgi apparatus membrane; Peripheral membrane protein; Cytoplasmic side.

It localises to the cytoplasm. It is found in the cytoplasmic vesicle. Its subcellular location is the COPII-coated vesicle membrane. The protein localises to the endoplasmic reticulum membrane. The protein resides in the golgi apparatus membrane. In terms of biological role, component of the coat protein complex II (COPII) which promotes the formation of transport vesicles from the endoplasmic reticulum (ER). The coat has two main functions, the physical deformation of the endoplasmic reticulum membrane into vesicles and the selection of cargo molecules. The protein is Protein transport protein SEC24-2 (SEC242) of Naumovozyma castellii (Yeast).